A 75-amino-acid chain; its full sequence is Putative snRNP Sm-like protein (75 aa).

One can recognise a Sm domain in the interval 4–75 (RPLDVIHRSL…NVLAISPTEE (72 aa)).

It belongs to the snRNP Sm proteins family.

This is Putative snRNP Sm-like protein from Pyrococcus horikoshii (strain ATCC 700860 / DSM 12428 / JCM 9974 / NBRC 100139 / OT-3).